The primary structure comprises 443 residues: MESLASLYKNHIATLQERTRDALARFKLDALLIHSGELFNVFLDDHPYPFKVNPQFKAWVPVTQVPNCWLLVDGVNKPKLWFYLPVDYWHNVEPLPTSFWTEDVEVIALPKADGIGSLLPAARGNIGYIGLVQERALQLGIEASNINPKGVIDYLHYYRSFKTEYELACMREAQKMAVNGHRAAEEAFRSGMSEFDINIAYLTATGHRDTDVPYSNIVALNEHAAVLHYTKLDHQAPEEMRSFLLDAGAEYNGYAADLTRTWSAKSDNDYAQLVKDVNDEQLALIATMKAGVSYVDYHIQFHQRIAKLLRKHQIITDMSEEAMVENDLTGPFMPHGIGHPLGLQVHDVAGFMQDDSGTHLAAPAKYPYLRCTRILQPGMVLTIEPGIYFIESLLAPWREGQFSKHFNWQKIEALKPFGGIRIEDNVVIHENNVENMTRDLKLA.

Residues Asp-246, Asp-257, His-339, Glu-384, and Glu-423 each contribute to the Mn(2+) site.

The protein belongs to the peptidase M24B family. Bacterial-type prolidase subfamily. Requires Mn(2+) as cofactor.

The catalysed reaction is Xaa-L-Pro dipeptide + H2O = an L-alpha-amino acid + L-proline. In terms of biological role, splits dipeptides with a prolyl residue in the C-terminal position. In Shigella flexneri serotype 5b (strain 8401), this protein is Xaa-Pro dipeptidase.